We begin with the raw amino-acid sequence, 239 residues long: 6-phosphogluconolactonase (239 aa).

It belongs to the glucosamine/galactosamine-6-phosphate isomerase family. 6-phosphogluconolactonase subfamily.

It catalyses the reaction 6-phospho-D-glucono-1,5-lactone + H2O = 6-phospho-D-gluconate + H(+). It functions in the pathway carbohydrate degradation; pentose phosphate pathway; D-ribulose 5-phosphate from D-glucose 6-phosphate (oxidative stage): step 2/3. Its function is as follows. Hydrolysis of 6-phosphogluconolactone to 6-phosphogluconate. The polypeptide is 6-phosphogluconolactonase (pgl) (Xylella fastidiosa (strain 9a5c)).